The chain runs to 400 residues: 2'-5'-oligoadenylate synthase 1 (400 aa).

Positions 13–60 are interaction with dsRNA; that stretch reads DKFIEDYLLPDTCFRMQINHAIDIICGFLKERCFRGSSYPVCVSKVVK. Residue Ser-63 participates in ATP binding. Positions 75, 77, and 148 each coordinate Mg(2+). The interval 200–210 is interaction with dsRNA; the sequence is QRPTKLKSLIR. The ATP site is built by Arg-210, Lys-213, and Gln-229. A lipid anchor (S-geranylgeranyl cysteine) is attached at Cys-397.

It belongs to the 2-5A synthase family. As to quaternary structure, monomer. Homotetramer. The cofactor is Mg(2+). Post-translationally, prenylated at C-terminal. C-terminal prenylation is necessary to initiate a block to SARS-CoV-2 and is associated with protection from severe COVID-1. The prenylated form is targeted to perinuclear structures rich in viral dsRNA, whereas the non-prenylated form is diffusely localized and unable to initiate a detectable block to SARS-CoV-2 replication. C-terminal prenylation is also necessary to initiate a block to cardiovirus EMCV. Not prenylated at C-terminal. The non-prenylated form is diffusely localized and unable to initiate a detectable block to SARS-CoV-2 replication. As to expression, expressed in lungs.

It is found in the cytoplasm. Its subcellular location is the mitochondrion. It localises to the nucleus. The protein resides in the microsome. The protein localises to the endoplasmic reticulum. It is found in the secreted. It carries out the reaction 3 ATP = 5'-triphosphoadenylyl-(2'-&gt;5')-adenylyl-(2'-&gt;5')-adenosine + 2 diphosphate. Produced as a latent enzyme which is activated by dsRNA generated during the course of viral infection. The dsRNA activator must be at least 15 nucleotides long, and no modification of the 2'-hydroxyl group is tolerated. ssRNA or dsDNA do not act as activators. Interferon-induced, dsRNA-activated antiviral enzyme which plays a critical role in cellular innate antiviral response. In addition, it may also play a role in other cellular processes such as apoptosis, cell growth, differentiation and gene regulation. Synthesizes higher oligomers of 2'-5'-oligoadenylates (2-5A) from ATP which then bind to the inactive monomeric form of ribonuclease L (RNase L) leading to its dimerization and subsequent activation. Activation of RNase L leads to degradation of cellular as well as viral RNA, resulting in the inhibition of protein synthesis, thus terminating viral replication. Can mediate the antiviral effect via the classical RNase L-dependent pathway or an alternative antiviral pathway independent of RNase L. The secreted form displays antiviral effect against vesicular stomatitis virus (VSV), herpes simplex virus type 2 (HSV-2), and encephalomyocarditis virus (EMCV) and stimulates the alternative antiviral pathway independent of RNase L. Functionally, when prenylated at C-terminal, acts as a double-stranded RNA (dsRNA) sensor specifically targeted to membranous replicative organelles in SARS coronavirus-2/SARS-CoV-2 infected cells where it binds to dsRNA structures in the SARS-CoV-2 5'-UTR and initiates a potent block to SARS-CoV-2 replication. Recognizes short stretches of dsRNA and activates RNase L. The binding is remarkably specific, with two conserved stem loops in the SARS-CoV-2 5'- untranslated region (UTR) constituting the principal viral target. The same mechanism is necessary to initiate a block to cardiovirus EMCV. In terms of biological role, not prenylated at C-terminal, is diffusely localized and unable to initiate a detectable block to SARS-CoV-2 replication. This chain is 2'-5'-oligoadenylate synthase 1 (OAS1), found in Homo sapiens (Human).